The chain runs to 881 residues: Probable intermembrane transport protein HI_1672 (881 aa).

The helical transmembrane segment at 30–49 (FWLLPFIALCIGAILFFQIV) threads the bilayer.

Belongs to the PqiB family.

It localises to the cell inner membrane. The protein is Probable intermembrane transport protein HI_1672 of Haemophilus influenzae (strain ATCC 51907 / DSM 11121 / KW20 / Rd).